The sequence spans 117 residues: Large ribosomal subunit protein bL19 (117 aa).

The protein belongs to the bacterial ribosomal protein bL19 family.

In terms of biological role, this protein is located at the 30S-50S ribosomal subunit interface and may play a role in the structure and function of the aminoacyl-tRNA binding site. This Paenarthrobacter aurescens (strain TC1) protein is Large ribosomal subunit protein bL19.